The following is a 738-amino-acid chain: MLGAIREPPIDVQIALHSRDDNQTGLVLRGTRRTVDRVLKGLCSSPCFFCSVSLTMATLTTTMATTATMATTEASKPLEAQARTALTKATNYAWEIFSNRHWCGELESNVTVTCEHIFFLYVLYQHIDPGEGSQYRQWLLSQQNSDGSWGIAPNYPGDISTSAEAYLALRIIGMSTDSPELYRARTFIRAAGGLSKMRMFTRIFFAEFGLVPWTAIPQLPAEFILVPAHFPISIYRLASWARSNVVPLLIIAHHRPLYPLPNGLHKQNPFLDELWLDPATKPLPYGSSDPTDPVAFVFTILDKALSYLGGLRRSPTRGYARRRCVQWILQHQEKAGDWAGIIPPMHAGIKALLLEGYKLHDEPIQLGLAAIERFTWADNRGKRLQCCISPVWDTVLMIRALQDTPASLGIKLDPRIADALAWTAENQHRGPEGDWRVYKPNIPVGGWAFEYHNTWYPDIDDTAAAVLAFLTHDPATARSRLVRDAVLWIVGMQNADGGWAAFDHENNQLFLNKIPFSDMESLCDPSTPDVTGRTIECLGMLRDLLMRPAENAENGEKYGYPDGEGDAAADAHLLQIINTACARAIPYLIRSQEATGTWYGRWAVNYVYGTCLVLCGLQYFKHDPKFAPEIQAMAARAVKWLKQVQNSDGGWGESLLSYREPWRAGCGPSTPSQTAWALMGILTVCGGEDRSVQRGVRHLVDTQDDTLSQGDGGAAAWTEREFTIREPLHEASQRIGSD.

PFTB repeat units follow at residues 132–173 (GSQY…RIIG) and 321–361 (RRRC…KLHD). The active-site Proton donor is the Asp-460. PFTB repeat units follow at residues 482-523 (VRDA…ESLC), 581-621 (CARA…QYFK), and 634-675 (AARA…SQTA).

The protein belongs to the terpene cyclase/mutase family.

Its pathway is secondary metabolite biosynthesis. Functionally, squalene hopane cyclase; part of the gene cluster that mediates the biosynthesis fumihopaside A, a hopane-type glucoside that enhances the thermotolerance and UV resistance of N.fumigata. The first step of fumihopaside A biosynthesis is performed by the squalene hopane cyclase afumA that catalyzes the cyclization of 3S-oxidosqualene into the hopene 21-beta-H-hopane-3-beta,22-diol. The cytochrome P450 monooxygenase afumB is responsible for both hydroxylation at C-24 and oxidations at C-30 of the afumA product. The glycosyltransferase afumC then catalyzes the glycosylation at C-24, using UDP-D-glucose as a donor, to produce fumihopaside A. AfumC is also able to accept UDP-D-galactose and UDP-D-glucuronic acid as donors to yield minor derivatives. Fumihopaside B, another minor derivative produced, is different from fumihopaside A due to the presence of a double bond between C-22 and C-29. This Aspergillus fumigatus (strain CBS 144.89 / FGSC A1163 / CEA10) (Neosartorya fumigata) protein is Squalene hopane cyclase afumA.